The following is a 214-amino-acid chain: NKG2-D type II integral membrane protein (214 aa).

Residues 1–56 are Cytoplasmic-facing; sequence MGWIRDRRSPSSMEIRELHNRDVINRGAFKSRQKRTQTLITSKCGENPSPFFLARS. Residues 57-77 traverse the membrane as a helical; Signal-anchor for type II membrane protein segment; it reads IAIAMGIRFIVMVMIYSGMII. Topologically, residues 78 to 214 are extracellular; sequence NLLFNQEAPS…NTYICMKRTV (137 aa). Disulfide bonds link Cys-94-Cys-103 and Cys-97-Cys-108. The region spanning 98 to 210 is the C-type lectin domain; sequence PKNWICYRNS…CLTLNTYICM (113 aa). 4 N-linked (GlcNAc...) asparagine glycosylation sites follow: Asn-113, Asn-129, Asn-161, and Asn-184. Cystine bridges form between Cys-125–Cys-209 and Cys-187–Cys-201.

As to quaternary structure, homodimer; disulfide-linked. Heterohexamer composed of two subunits of KLRK1 and four subunits of HCST/DAP10. Interacts (via transmembrane domain) with HCST/DAP10 (via transmembrane domain); the interaction is required for KLRK1 NK cell surface and induces NK cell-mediated cytotoxicity. Can form disulfide-bonded heterodimer with CD94. Interacts with CEACAM1; recruits PTPN6 that dephosphorylates VAV1. In terms of tissue distribution, detected in peripheral blood leukocytes, macrophages, monocytes and natural killer cells.

It is found in the cell membrane. In terms of biological role, functions as an activating and costimulatory receptor involved in immunosurveillance upon binding to various cellular stress-inducible ligands displayed at the surface of autologous tumor cells and virus-infected cells. Provides both stimulatory and costimulatory innate immune responses on activated killer (NK) cells, leading to cytotoxic activity. Acts as a costimulatory receptor for T-cell receptor (TCR) in CD8(+) T-cell-mediated adaptive immune responses by amplifying T-cell activation. Stimulates perforin-mediated elimination of ligand-expressing tumor cells. Signaling involves calcium influx, culminating in the expression of TNF-alpha. Participates in NK cell-mediated bone marrow graft rejection. May play a regulatory role in differentiation and survival of NK cells. Binds to ligands belonging to various subfamilies of MHC class I-related glycoproteins. The protein is NKG2-D type II integral membrane protein (KLRK1) of Sus scrofa (Pig).